The primary structure comprises 62 residues: MEYSTGQHLLTIPEIKRYILRNNFSNEEHIVTESMLRNAFKAEYTKIMSNRNEAWTVTDYYD.

Its function is as follows. May participate in replication-dependent transcriptional events during viral growth. This chain is Protein gp45.2 (45.2), found in Escherichia coli (Bacteriophage T4).